The primary structure comprises 547 residues: Elongator complex protein 3 (547 aa).

In terms of domain architecture, Radical SAM core spans 82-372 (RTASGIAVVA…YRVQRDIPMP (291 aa)). [4Fe-4S] cluster contacts are provided by Cys99, Cys109, and Cys112. Ser161 is modified (phosphoserine). Residue Lys164 coordinates acetyl-CoA. Tyr202 is modified (phosphotyrosine; by ALK). Lys229 carries the post-translational modification N6-methyllysine. Tyr251 carries the phosphotyrosine modification. The N-acetyltransferase domain maps to 396-547 (IQCRDVRTRE…QGPYMVKMLK (152 aa)). Residues 474–477 (ELHV), 497–499 (FGM), and Tyr530 contribute to the acetyl-CoA site.

It belongs to the ELP3 family. In terms of assembly, component of the elongator complex which consists of ELP1, ELP2, ELP3, ELP4, ELP5 and ELP6. ELP1, ELP2 and ELP3 form the elongator core complex. Interacts with alpha-tubulin. The cofactor is [4Fe-4S] cluster. In terms of processing, tyrosine-phosphorylated; phosphorylation on Tyr-202 does not affect elongator complex integrity or ELP3 protein stability. Also serine/threonine-phosphorylated. In terms of tissue distribution, expressed in the cerebellum and spinal motor neurons.

The protein resides in the cytoplasm. It is found in the nucleus. It carries out the reaction uridine(34) in tRNA + acetyl-CoA + S-adenosyl-L-methionine + H2O = 5-(carboxymethyl)uridine(34) in tRNA + 5'-deoxyadenosine + L-methionine + CoA + 2 H(+). It participates in tRNA modification; 5-methoxycarbonylmethyl-2-thiouridine-tRNA biosynthesis. Catalytic tRNA acetyltransferase subunit of the elongator complex which is required for multiple tRNA modifications, including mcm5U (5-methoxycarbonylmethyl uridine), mcm5s2U (5-methoxycarbonylmethyl-2-thiouridine), and ncm5U (5-carbamoylmethyl uridine). In the elongator complex, acts as a tRNA uridine(34) acetyltransferase by mediating formation of carboxymethyluridine in the wobble base at position 34 in tRNAs. May also act as a protein lysine acetyltransferase by mediating acetylation of target proteins; such activity is however unclear in vivo and recent evidences suggest that ELP3 primarily acts as a tRNA acetyltransferase. Involved in neurogenesis: regulates the migration and branching of projection neurons in the developing cerebral cortex, through a process depending on alpha-tubulin acetylation. Required for acetylation of GJA1 in the developing cerebral cortex. This is Elongator complex protein 3 from Homo sapiens (Human).